Reading from the N-terminus, the 118-residue chain is Large ribosomal subunit protein bL19 (118 aa).

The protein belongs to the bacterial ribosomal protein bL19 family.

In terms of biological role, this protein is located at the 30S-50S ribosomal subunit interface and may play a role in the structure and function of the aminoacyl-tRNA binding site. The sequence is that of Large ribosomal subunit protein bL19 from Dictyoglomus turgidum (strain DSM 6724 / Z-1310).